Here is a 668-residue protein sequence, read N- to C-terminus: MAANMYRVGDYVYFENSSSNPYLVRRIEELNKTANGNVEAKVVCLFRRRDISSSLNSLADSNAREFEEESKQPGVSEQQRHQLKHRELFLSRQFESLPATHIRGKCSVTLLNETDILNQYLDKEDCFFYSLVFDPVQKTLLADQGEIRVGCKFQAEIPDRLAEGESDNRNQQKMEMKVWDPDNPLTDRQIDQFLVVARAVGTFARALDCSSSIRQPSLHMSAAAASRDITLFHAMDTLQRNGYDLAKAMSTLVPQGGPVLCRDEMEEWSASEAMLFEEALEKYGKDFNDIRQDFLPWKSLASIVQFYYMWKTTDRYIQQKRLKAAEADSKLKQVYIPTYTKPNPNQIISVGSKPGMNGAGFQKGLTCESCHTTQSAQWYAWGPPNMQCRLCASCWIYWKKYGGLKTPTQLEGAARGTTEPHSRGHLSRPEAQSLSPYTTSANRAKLLAKNRQTFLLQTTKLTRLARRMCRDLLQPRRAARRPYAPINANAIKAECSIRLPKAAKTPLKIHPLVRLPLATIVKDLVAQAPLKPKTPRGTKTPINRNQLTQNRGLGGIMVKRSYETMAGAGVPFSANGRPLASGIRSSSQPAAKRQKLNPADAPNPVVFVATKDTRALRKALTHLEMRRAARRPNLPLKVKPTLMTVRPPVPLPASSHPASTNEPIVLED.

Residues 1-144 (MAANMYRVGD…PVQKTLLADQ (144 aa)) form the BAH domain. Phosphoserine occurs at positions 52 and 54. Residues 145–256 (GEIRVGCKFQ…KAMSTLVPQG (112 aa)) enclose the ELM2 domain. Position 152 is an N6-acetyllysine (Lys-152). In terms of domain architecture, SANT spans 263 to 315 (DEMEEWSASEAMLFEEALEKYGKDFNDIRQDFLPWKSLASIVQFYYMWKTTDR). A GATA-type; atypical zinc finger spans residues 367–394 (CESCHTTQSAQWYAWGPPNMQCRLCASC). The tract at residues 412 to 437 (GAARGTTEPHSRGHLSRPEAQSLSPY) is disordered. Phosphoserine is present on residues Ser-433 and Ser-435. At Lys-460 the chain carries N6-acetyllysine. Lys-492 participates in a covalent cross-link: Glycyl lysine isopeptide (Lys-Gly) (interchain with G-Cter in SUMO2 and SUMO3); alternate. Lys-492 participates in a covalent cross-link: Glycyl lysine isopeptide (Lys-Gly) (interchain with G-Cter in SUMO2); alternate. Residue Lys-508 forms a Glycyl lysine isopeptide (Lys-Gly) (interchain with G-Cter in SUMO2) linkage. N6-acetyllysine is present on residues Lys-522 and Lys-531. The residue at position 534 (Thr-534) is a Phosphothreonine. Glycyl lysine isopeptide (Lys-Gly) (interchain with G-Cter in SUMO2) cross-links involve residues Lys-559 and Lys-595. Disordered regions lie at residues 580–599 (ASGIRSSSQPAAKRQKLNPA) and 647–668 (PPVPLPASSHPASTNEPIVLED).

This sequence belongs to the metastasis-associated protein family. In terms of assembly, component of the nucleosome remodeling and deacetylase (NuRD) repressor complex, composed of core proteins MTA1, MTA2, MTA3, RBBP4, RBBP7, HDAC1, HDAC2, MBD2, MBD3, and peripherally associated proteins CDK2AP1, CDK2AP2, GATAD2A, GATAD2B, CHD3, CHD4 and CHD5. The exact stoichiometry of the NuRD complex is unknown, and some subunits such as MBD2 and MBD3, GATAD2A and GATAD2B, and CHD3, CHD4 and CHD5 define mutually exclusive NuRD complexes. Interacts with CHD3. Interacts with CHD4. Interacts with GATAD2A. Interacts with HDAC7. Interacts with MBD3. Interacts with p53/TP53. Interacts with MINT. Interacts with PIMREG. Interacts with NACC2. Interacts with ERCC6. Interacts with PWWP2B. Interacts with transcription factor BCL11A.

It is found in the nucleus. Functionally, may function as a transcriptional coregulator. Acts as a component of the histone deacetylase NuRD complex which participates in the remodeling of chromatin. The chain is Metastasis-associated protein MTA2 (Mta2) from Mus musculus (Mouse).